The chain runs to 634 residues: uncharacterized protein (634 aa).

Residues Met-1 to Ala-40 form the signal peptide. Residues Arg-41–Gly-589 are Extracellular-facing. An N-linked (GlcNAc...) asparagine glycan is attached at Asn-363. Residues Leu-590–Phe-610 form a helical membrane-spanning segment. The Cytoplasmic segment spans residues Lys-611 to Val-634.

Its subcellular location is the membrane. This is an uncharacterized protein from Bos taurus (Bovine).